A 435-amino-acid chain; its full sequence is Exodeoxyribonuclease 7 large subunit (435 aa).

A compositionally biased stretch (polar residues) spans 1–10 (MRGTRVTETA). Disordered regions lie at residues 1-21 (MRGT…GPPT) and 413-435 (AGKA…PRGK).

The protein belongs to the XseA family. As to quaternary structure, heterooligomer composed of large and small subunits.

It is found in the cytoplasm. It carries out the reaction Exonucleolytic cleavage in either 5'- to 3'- or 3'- to 5'-direction to yield nucleoside 5'-phosphates.. Functionally, bidirectionally degrades single-stranded DNA into large acid-insoluble oligonucleotides, which are then degraded further into small acid-soluble oligonucleotides. In Leifsonia xyli subsp. xyli (strain CTCB07), this protein is Exodeoxyribonuclease 7 large subunit.